The sequence spans 321 residues: Lipoyl synthase (321 aa).

[4Fe-4S] cluster contacts are provided by Cys68, Cys73, Cys79, Cys94, Cys98, Cys101, and Ser308. One can recognise a Radical SAM core domain in the interval 80–297 (FNHGTATFMI…KALADELGFT (218 aa)).

This sequence belongs to the radical SAM superfamily. Lipoyl synthase family. Requires [4Fe-4S] cluster as cofactor.

The protein localises to the cytoplasm. It catalyses the reaction [[Fe-S] cluster scaffold protein carrying a second [4Fe-4S](2+) cluster] + N(6)-octanoyl-L-lysyl-[protein] + 2 oxidized [2Fe-2S]-[ferredoxin] + 2 S-adenosyl-L-methionine + 4 H(+) = [[Fe-S] cluster scaffold protein] + N(6)-[(R)-dihydrolipoyl]-L-lysyl-[protein] + 4 Fe(3+) + 2 hydrogen sulfide + 2 5'-deoxyadenosine + 2 L-methionine + 2 reduced [2Fe-2S]-[ferredoxin]. Its pathway is protein modification; protein lipoylation via endogenous pathway; protein N(6)-(lipoyl)lysine from octanoyl-[acyl-carrier-protein]: step 2/2. Catalyzes the radical-mediated insertion of two sulfur atoms into the C-6 and C-8 positions of the octanoyl moiety bound to the lipoyl domains of lipoate-dependent enzymes, thereby converting the octanoylated domains into lipoylated derivatives. This Shewanella baltica (strain OS223) protein is Lipoyl synthase.